A 293-amino-acid chain; its full sequence is Glycine--tRNA ligase alpha subunit (293 aa).

This sequence belongs to the class-II aminoacyl-tRNA synthetase family. Tetramer of two alpha and two beta subunits.

The protein localises to the cytoplasm. It carries out the reaction tRNA(Gly) + glycine + ATP = glycyl-tRNA(Gly) + AMP + diphosphate. The chain is Glycine--tRNA ligase alpha subunit from Prochlorococcus marinus (strain MIT 9211).